Here is a 245-residue protein sequence, read N- to C-terminus: tRNA (guanine-N(1)-)-methyltransferase (245 aa).

S-adenosyl-L-methionine-binding positions include G112 and I132–L137.

Belongs to the RNA methyltransferase TrmD family. As to quaternary structure, homodimer.

The protein localises to the cytoplasm. It catalyses the reaction guanosine(37) in tRNA + S-adenosyl-L-methionine = N(1)-methylguanosine(37) in tRNA + S-adenosyl-L-homocysteine + H(+). Functionally, specifically methylates guanosine-37 in various tRNAs. This Geobacter sulfurreducens (strain ATCC 51573 / DSM 12127 / PCA) protein is tRNA (guanine-N(1)-)-methyltransferase.